A 414-amino-acid chain; its full sequence is Voltage-gated ClC-type chloride channel ClcB (414 aa).

11 helical membrane passes run 5-25 (LVIS…FHQA), 54-74 (ALTP…YQRY), 116-136 (SAIG…SVFA), 147-167 (LWVA…PLAG), 169-189 (LFIA…PVVI), 220-240 (VQYF…PLFL), 255-275 (LLPP…SLIF), 292-312 (TPPG…AVLA), 327-347 (LFVG…WPVL), 353-373 (LLMA…APIM), and 381-401 (MTGE…ATTI).

Belongs to the chloride channel (TC 2.A.49) family. ClcB subfamily.

The protein resides in the cell inner membrane. Probably acts as an electrical shunt for an outwardly-directed proton pump that is linked to amino acid decarboxylation, as part of the extreme acid resistance (XAR) response. The protein is Voltage-gated ClC-type chloride channel ClcB of Yersinia pestis.